Reading from the N-terminus, the 130-residue chain is Small ribosomal subunit protein uS8 (130 aa).

The protein belongs to the universal ribosomal protein uS8 family. Part of the 30S ribosomal subunit. Contacts proteins S5 and S12.

One of the primary rRNA binding proteins, it binds directly to 16S rRNA central domain where it helps coordinate assembly of the platform of the 30S subunit. This Cereibacter sphaeroides (strain KD131 / KCTC 12085) (Rhodobacter sphaeroides) protein is Small ribosomal subunit protein uS8.